A 424-amino-acid chain; its full sequence is MAKNIQAIRGMNDYLPEETAFWQCVEGTLKNVLASYGYSEIRLPIVEQTPLFQRAIGEVTDVVEKEMYTFADRNGDSLTLRPEGTAGCVRAGIEHGLLYNQEQRLWYVGPMFRYERPQKGRYRQFHQMGAEVFGQQGPDVDAELILLTARWWRALGIQEHVALELNSIGSLEACARYREALVAFLRQHEDRLDEDCRRRMHTNPMRVLDTKNPDIQVLLNDAPVLTDYLDDDSQAHFSGLCELLDLAGIPYTVNPRLVRGLDYYNRTVFEWVTTRLGSQGTVCGGGRYDGLVEQLGGRATPAVGFAMGLERLVLLVQAVNPDFAAAARVDAYLVAAGDGVQREALRLAEQLRDELSSLRLMTNYGGGSFKKQFGRADKHGARIALVLGESEAAAGQVVVKDLATGNQETLAQSDVAARLASILG.

The protein belongs to the class-II aminoacyl-tRNA synthetase family. Homodimer.

It localises to the cytoplasm. The catalysed reaction is tRNA(His) + L-histidine + ATP = L-histidyl-tRNA(His) + AMP + diphosphate + H(+). This chain is Histidine--tRNA ligase, found in Sodalis glossinidius (strain morsitans).